Here is a 409-residue protein sequence, read N- to C-terminus: TNF receptor-associated factor 1 (409 aa).

Serine 139 is modified (phosphoserine). Residues 167-256 (EELALQHLVK…EHSLRLMEEA (90 aa)) adopt a coiled-coil conformation. Glycyl lysine isopeptide (Lys-Gly) (interchain with G-Cter in ubiquitin) cross-links involve residues lysine 178 and lysine 186. In terms of domain architecture, MATH spans 259-405 (DGTFLWKITN…DDTMFLKCIV (147 aa)).

Homotrimer. Heterotrimer with TRAF2. Interacts with TNFRSF1A/TNFR1, TNFRSF1B/TNFR2, TNFRSF4, TNFRSF5/CD40, TNFRSF8/CD30, TNFRSF9/CD137, TNFRSF11A/RANK, TNFRSF13C, TNFRSF18/AITR, TNFRSF17/BCMA, TNFRSF19/TROY, TNFRSF19L/RELT, XEDAR, EDAR, Epstein-Barr virus BNFL1/LMP-1, TANK/ITRAF, TRAIP and RIPK2. Interacts with BIRC2 and BIRC3 N-terminus; a single BIRC2 or BIRC3 molecule interacts with a heterotrimer formed by TRAF1 and TRAF2. Interacts with MAP3K14. Interacts with NFATC2IP, TRAFD1 and with HIVEP3. Interacts with GPS2. Polyubiquitinated by BIRC2 and/or BIRC3, leading to its subsequent proteasomal degradation. Ubiquitinated by the SCF(FBXL2) complex, leading to its degradation by the proteasome.

It is found in the cytoplasm. Its function is as follows. Adapter molecule that regulates the activation of NF-kappa-B and JNK. Plays a role in the regulation of cell survival and apoptosis. The heterotrimer formed by TRAF1 and TRAF2 is part of a E3 ubiquitin-protein ligase complex that promotes ubiquitination of target proteins, such as MAP3K14. The TRAF1/TRAF2 complex recruits the antiapoptotic E3 protein-ubiquitin ligases BIRC2 and BIRC3 to TNFRSF1B/TNFR2. This chain is TNF receptor-associated factor 1 (Traf1), found in Mus musculus (Mouse).